We begin with the raw amino-acid sequence, 88 residues long: MKSIVYMLLFCTFTVVILGHPNDHGALIPYRAEKLPNGEWCIRPGYSCSERGQCCMPVDGDTYTYGCGRAWSEGSKVCFICNRESSMC.

A signal peptide spans Met1–Gly19. 4 disulfide bridges follow: Cys41–Cys55, Cys41–Cys78, Cys54–Cys67, and Cys81–Cys88.

The protein belongs to the neurotoxin 27 (Jztx-72) family. ICK-41 subfamily. In terms of tissue distribution, expressed by the venom gland.

The protein resides in the secreted. Functionally, probable neurotoxin with ion channel impairing activity. The chain is Toxin ICK-12 from Trittame loki (Brush-footed trapdoor spider).